The sequence spans 334 residues: G-protein coupled receptor 12 (334 aa).

Residues 1–48 (MNEDLKVNLSGLPRDYLDAAAAENISAAVSSRVPAVEPEPELVVNPWD) are Extracellular-facing. 2 N-linked (GlcNAc...) asparagine glycosylation sites follow: asparagine 8 and asparagine 24. Residues 49–69 (IVLCTSGTLISCENAIVVLII) form a helical membrane-spanning segment. The Cytoplasmic segment spans residues 70-77 (FHNPSLRA). Residues 78-98 (PMFLLIGSLALADLLAGIGLI) form a helical membrane-spanning segment. Over 99-113 (TNFVFAYLLQSEATK) the chain is Extracellular. Residues 114 to 134 (LVTIGLIVASFSASVCSLLAI) traverse the membrane as a helical segment. The Cytoplasmic portion of the chain corresponds to 135 to 158 (TVDRYLSLYYALTYHSERTVTFTY). A helical membrane pass occupies residues 159-179 (VMLVMLWGTSICLGLLPVMGW). Topologically, residues 180–199 (NCLRDESTCSVVRPLTKNNA) are extracellular. The helical transmembrane segment at 200–220 (AILSVSFLFMFALMLQLYIQI) threads the bilayer. The Cytoplasmic segment spans residues 221–252 (CKIVMRHAHQIALQHHFLATSHYVTTRKGVST). The helical transmembrane segment at 253-273 (LAIILGTFAACWMPFTLYSLI) threads the bilayer. Residues 274 to 282 (ADYTYPSIY) are Extracellular-facing. The chain crosses the membrane as a helical span at residues 283–303 (TYATLLPATYNSIINPVIYAF). Residues 304–334 (RNQEIQKALCLICCGCIPSSLAQRARSPSDV) are Cytoplasmic-facing. Cysteine 317 is lipidated: S-palmitoyl cysteine. A phosphoserine mark is found at serine 330 and serine 332.

The protein belongs to the G-protein coupled receptor 1 family.

It localises to the cell membrane. Functionally, promotes neurite outgrowth and blocks myelin inhibition in neurons. Receptor with constitutive G(s) signaling activity that stimulates cyclic AMP production. The sequence is that of G-protein coupled receptor 12 (GPR12) from Homo sapiens (Human).